The following is a 101-amino-acid chain: Early E3A 11.6 kDa glycoprotein (101 aa).

The N-linked (GlcNAc...) asparagine; by host glycan is linked to Asn-14. The chain crosses the membrane as a helical span at residues 41–62; sequence MWWFSIALMFVCLIIMWLICCL.

This sequence belongs to the adenoviridae E3A-1 family. In terms of processing, N-glycosylated and probably also O-glycosylated.

The protein localises to the host nucleus membrane. In Human adenovirus C serotype 6 (HAdV-6), this protein is Early E3A 11.6 kDa glycoprotein.